The following is a 134-amino-acid chain: MWSDPIADMLTRIRNANAAFKESVDLPASNMKRAILEILKKEGYIEDYKYIEDGKQGILKVFLKYKGDRRNRQRVISGIVRVSKPGRRIYVSKDELPKVKSGMGIAVISTSKGIITDKEARKKNVGGEVICYVW.

This sequence belongs to the universal ribosomal protein uS8 family. In terms of assembly, part of the 30S ribosomal subunit. Contacts proteins S5 and S12.

Functionally, one of the primary rRNA binding proteins, it binds directly to 16S rRNA central domain where it helps coordinate assembly of the platform of the 30S subunit. The protein is Small ribosomal subunit protein uS8 of Kosmotoga olearia (strain ATCC BAA-1733 / DSM 21960 / TBF 19.5.1).